We begin with the raw amino-acid sequence, 393 residues long: S-adenosylmethionine synthase 2 (393 aa).

Glu-9 serves as a coordination point for Mg(2+). His-15 provides a ligand contact to ATP. Glu-43 is a K(+) binding site. Residues Glu-56 and Gln-99 each coordinate L-methionine. Residues Asp-167–Lys-169, Ser-235–Phe-238, Asp-246, Arg-252–Lys-253, Ala-269, Lys-273, and Lys-277 each bind ATP. Asp-246 lines the L-methionine pocket. Lys-277 provides a ligand contact to L-methionine.

It belongs to the AdoMet synthase family. In terms of assembly, homotetramer. Interacts with GRF3. It depends on Mn(2+) as a cofactor. The cofactor is Mg(2+). Requires Co(2+) as cofactor. K(+) is required as a cofactor. In terms of tissue distribution, highly expressed in stems and roots. Detected in trichomes (at the protein level).

It is found in the cytoplasm. The catalysed reaction is L-methionine + ATP + H2O = S-adenosyl-L-methionine + phosphate + diphosphate. It functions in the pathway amino-acid biosynthesis; S-adenosyl-L-methionine biosynthesis; S-adenosyl-L-methionine from L-methionine: step 1/1. Its activity is regulated as follows. Inhibited by 5,5'-dithiobis-2-nitrobenzoic acid (DTNB) and N-ethylmaleimide (NEM) (in vitro). In terms of biological role, catalyzes the formation of S-adenosylmethionine from methionine and ATP. The reaction comprises two steps that are both catalyzed by the same enzyme: formation of S-adenosylmethionine (AdoMet) and triphosphate, and subsequent hydrolysis of the triphosphate. In Arabidopsis thaliana (Mouse-ear cress), this protein is S-adenosylmethionine synthase 2 (SAM2).